Here is a 461-residue protein sequence, read N- to C-terminus: tRNA modification GTPase MnmE (461 aa).

Arg-22, Glu-87, and Arg-126 together coordinate (6S)-5-formyl-5,6,7,8-tetrahydrofolate. In terms of domain architecture, TrmE-type G spans 222 to 382 (GITAVIAGKP…LENKLYEILI (161 aa)). Residue Asn-232 coordinates K(+). GTP contacts are provided by residues 232–237 (NVGKSS), 251–257 (TDIPGTT), 276–279 (DTAG), and 363–365 (SAR). Ser-236 is a binding site for Mg(2+). Residues Thr-251, Ile-253, and Thr-256 each coordinate K(+). Residue Thr-257 coordinates Mg(2+). Lys-461 serves as a coordination point for (6S)-5-formyl-5,6,7,8-tetrahydrofolate.

This sequence belongs to the TRAFAC class TrmE-Era-EngA-EngB-Septin-like GTPase superfamily. TrmE GTPase family. Homodimer. Heterotetramer of two MnmE and two MnmG subunits. The cofactor is K(+).

Its subcellular location is the cytoplasm. Its function is as follows. Exhibits a very high intrinsic GTPase hydrolysis rate. Involved in the addition of a carboxymethylaminomethyl (cmnm) group at the wobble position (U34) of certain tRNAs, forming tRNA-cmnm(5)s(2)U34. This chain is tRNA modification GTPase MnmE, found in Carboxydothermus hydrogenoformans (strain ATCC BAA-161 / DSM 6008 / Z-2901).